The following is a 148-amino-acid chain: MFDVTLLILLGLAALGFISHNTTVAVSILVLIIVRVTPLNTFFPWIEKQGLTVGIIILTIGVMAPIASGSLPPSTLIHSFVNWKSLVAIAIGVFVSWLGGRGVTLMGSQPQLVAGLLVGTVLGVALFRGVPVGPLIAAGLVSLIIGKQ.

Helical transmembrane passes span 14-34, 51-71, 86-106, and 121-141; these read ALGFISHNTTVAVSILVLIIV, LTVGIIILTIGVMAPIASGSL, LVAIAIGVFVSWLGGRGVTLM, and VLGVALFRGVPVGPLIAAGLV.

It belongs to the UPF0756 family.

The protein resides in the cell membrane. The chain is UPF0756 membrane protein CKO_01811 from Citrobacter koseri (strain ATCC BAA-895 / CDC 4225-83 / SGSC4696).